Reading from the N-terminus, the 1112-residue chain is DNA-directed RNA polymerase subunit beta (1112 aa).

Residues 1087 to 1112 (VGGRRTPNRPTYENIGGPREMEFSED) form a disordered region.

Belongs to the RNA polymerase beta chain family. As to quaternary structure, in cyanobacteria the RNAP catalytic core is composed of 2 alpha, 1 beta, 1 beta', 1 gamma and 1 omega subunit. When a sigma factor is associated with the core the holoenzyme is formed, which can initiate transcription.

It carries out the reaction RNA(n) + a ribonucleoside 5'-triphosphate = RNA(n+1) + diphosphate. Its function is as follows. DNA-dependent RNA polymerase catalyzes the transcription of DNA into RNA using the four ribonucleoside triphosphates as substrates. In Gloeobacter violaceus (strain ATCC 29082 / PCC 7421), this protein is DNA-directed RNA polymerase subunit beta.